Reading from the N-terminus, the 1074-residue chain is ADAMTS-like protein 4 (1074 aa).

Positions 1 to 24 (MENWTGRPWLYLLLLLSLPQLCLD) are cleaved as a signal peptide. Residues 48–93 (GPWVQWASCSQPCGVGVQRRSRTCQLPTVQLHPSLPLPPRPPRHPE) enclose the TSP type-1 1 domain. The segment at 77 to 342 (QLHPSLPLPP…QHPGAWLPLL (266 aa)) is disordered. Residues 103–119 (RPQTSPETLPLYRTQSR) are compositionally biased toward polar residues. Over residues 132 to 152 (LGREETQEIRAARRSRLRDPI) the composition is skewed to basic and acidic residues. Residues 206 to 226 (ANGSPQTELPPTELSVHTPSP) show a composition bias toward polar residues. Residues 310 to 323 (GQQGQGPWGTGGTP) are compositionally biased toward gly residues. N-linked (GlcNAc...) (complex) asparagine glycosylation is present at Asn490. TSP type-1 domains lie at 723-782 (CPPY…QLRL), 783-842 (CGHW…GPCT), 845-909 (WFHS…GPCE), 910-969 (RTWR…QGQA), and 970-1026 (CQDR…QPCS). Asn773 carries an N-linked (GlcNAc...) asparagine glycan. The region spanning 1029-1066 (PDDQCKDSSPHCPLVVQARLCVYPYYTATCCRSCAHVL) is the PLAC domain.

As to quaternary structure, interacts with CTSB. Interacts with FBN1. Post-translationally, N-glycosylated. Can be O-fucosylated by POFUT2 on a serine or a threonine residue found within the consensus sequence C1-X(2)-(S/T)-C2-G of the TSP type-1 repeat domains where C1 and C2 are the first and second cysteine residue of the repeat, respectively. Fucosylated repeats can then be further glycosylated by the addition of a beta-1,3-glucose residue by the glucosyltransferase, B3GALTL. Fucosylation mediates the efficient secretion of ADAMTS family members. Can also be C-glycosylated with one or two mannose molecules on tryptophan residues within the consensus sequence W-X-X-W of the TPRs. N- and C-glycosylations can also facilitate secretion. As to expression, expressed in colon, heart, leukocyte, liver, lung, skeletal muscle, spleen, testis and placenta. Weaker expression in bone marrow, brain tissue, kidney and pancreas. Expression studies in fetal tissues reveal strong expression in heart, kidney, liver, lung and skeletal muscle, but weaker expression in fetal brain and skin.

The protein resides in the secreted. The protein localises to the extracellular space. It is found in the extracellular matrix. In terms of biological role, positive regulation of apoptosis. May facilitate FBN1 microfibril biogenesis. The polypeptide is ADAMTS-like protein 4 (ADAMTSL4) (Homo sapiens (Human)).